The primary structure comprises 600 residues: Adenine deaminase (600 aa).

It belongs to the metallo-dependent hydrolases superfamily. Adenine deaminase family. It depends on Mn(2+) as a cofactor.

It catalyses the reaction adenine + H2O + H(+) = hypoxanthine + NH4(+). The chain is Adenine deaminase from Roseobacter denitrificans (strain ATCC 33942 / OCh 114) (Erythrobacter sp. (strain OCh 114)).